Consider the following 251-residue polypeptide: Tyrosine phosphatase-like protein J3 (251 aa).

The Tyrosine-protein phosphatase domain maps to 26-251 (IADEYYTIVP…PVLQNSKRRE (226 aa)).

This sequence belongs to the protein-tyrosine phosphatase family.

In Microplitis demolitor (Parasitoid wasp), this protein is Tyrosine phosphatase-like protein J3 (J4).